The primary structure comprises 65 residues: White colony protein WHS11 (65 aa).

Residues 1–17 (MSDLGRKDIGDKIESKL) are compositionally biased toward basic and acidic residues. The interval 1–32 (MSDLGRKDIGDKIESKLTPDSQKSTPEQFKDK) is disordered. Over residues 18 to 27 (TPDSQKSTPE) the composition is skewed to polar residues.

It to yeast HSP12/GLP1 and S.pombe hsp9.

The chain is White colony protein WHS11 (WHS11) from Candida albicans (strain WO-1) (Yeast).